Here is a 220-residue protein sequence, read N- to C-terminus: Translation initiation factor 6 (220 aa).

It belongs to the eIF-6 family.

Functionally, binds to the 50S ribosomal subunit and prevents its association with the 30S ribosomal subunit to form the 70S initiation complex. This Pyrobaculum arsenaticum (strain DSM 13514 / JCM 11321 / PZ6) protein is Translation initiation factor 6.